A 102-amino-acid chain; its full sequence is Outer membrane protein assembly factor BamE (102 aa).

Positions 1–20 (MNNYIKALLIIICFSSCSIS) are cleaved as a signal peptide.

The protein belongs to the BamE family. Part of the Bam complex.

It localises to the cell outer membrane. Part of the outer membrane protein assembly complex, which is involved in assembly and insertion of beta-barrel proteins into the outer membrane. This Buchnera aphidicola subsp. Acyrthosiphon pisum (strain APS) (Acyrthosiphon pisum symbiotic bacterium) protein is Outer membrane protein assembly factor BamE.